The sequence spans 257 residues: tRNA (cytidine/uridine/adenosine-2'-O-)-methyltransferase TrmJ (257 aa).

Residues 79 to 82 (TSAR), 115 to 117 (GRE), isoleucine 135, and 142 to 144 (GSL) contribute to the S-adenosyl-L-methionine site.

It belongs to the class IV-like SAM-binding methyltransferase superfamily. RNA methyltransferase TrmH family. As to quaternary structure, homodimer.

The protein resides in the cytoplasm. It catalyses the reaction cytidine(32) in tRNA + S-adenosyl-L-methionine = 2'-O-methylcytidine(32) in tRNA + S-adenosyl-L-homocysteine + H(+). It carries out the reaction uridine(32) in tRNA + S-adenosyl-L-methionine = 2'-O-methyluridine(32) in tRNA + S-adenosyl-L-homocysteine + H(+). The catalysed reaction is adenosine(32) in tRNA + S-adenosyl-L-methionine = 2'-O-methyladenosine(32) in tRNA + S-adenosyl-L-homocysteine + H(+). In terms of biological role, catalyzes the formation of 2'O-methylated cytidine (Cm32), 2'O-methylated uridine (Um32) or 2'O-methylated adenosine (Am32) at position 32 in tRNA. Confers resistance to oxidative stress. The chain is tRNA (cytidine/uridine/adenosine-2'-O-)-methyltransferase TrmJ from Pseudomonas aeruginosa (strain UCBPP-PA14).